The primary structure comprises 374 residues: Flagellar P-ring protein 1 (374 aa).

The signal sequence occupies residues 1-29; it reads MPGVRWVRIVGVACAALSALALSVTSASA.

It belongs to the FlgI family. In terms of assembly, the basal body constitutes a major portion of the flagellar organelle and consists of four rings (L,P,S, and M) mounted on a central rod.

Its subcellular location is the periplasm. The protein resides in the bacterial flagellum basal body. Assembles around the rod to form the L-ring and probably protects the motor/basal body from shearing forces during rotation. This chain is Flagellar P-ring protein 1, found in Bradyrhizobium diazoefficiens (strain JCM 10833 / BCRC 13528 / IAM 13628 / NBRC 14792 / USDA 110).